Reading from the N-terminus, the 723-residue chain is Peroxisomal bifunctional enzyme (723 aa).

The tract at residues 1–282 (MAEYTRLHNA…FAERKANKWS (282 aa)) is enoyl-CoA hydratase / isomerase. Lysine 38 carries the N6-succinyllysine modification. Residue glycine 101 coordinates substrate. Lysine 165 carries the post-translational modification N6-acetyllysine; alternate. Residue lysine 165 is modified to N6-succinyllysine; alternate. Position 171 is an N6-acetyllysine (lysine 171). The residue at position 219 (lysine 219) is an N6-acetyllysine; alternate. Lysine 219 carries the N6-succinyllysine; alternate modification. Lysine 250 bears the N6-acetyllysine mark. N6-succinyllysine is present on residues lysine 280 and lysine 290. The interval 283–572 (TPSGASWKTA…DVLCELGRFG (290 aa)) is 3-hydroxyacyl-CoA dehydrogenase. N6-acetyllysine is present on residues lysine 346, lysine 350, and lysine 464. Position 532 is an N6-succinyllysine (lysine 532). Threonine 548 is modified (phosphothreonine). Residue lysine 577 is modified to N6-succinyllysine. Lysine 584, lysine 591, and lysine 710 each carry N6-acetyllysine; alternate. N6-succinyllysine; alternate is present on residues lysine 584, lysine 591, and lysine 710. Serine 718 bears the Phosphoserine mark. Positions 721-723 (SKL) match the Microbody targeting signal motif. Lysine 722 carries the N6-succinyllysine modification.

The protein in the N-terminal section; belongs to the enoyl-CoA hydratase/isomerase family. In the C-terminal section; belongs to the 3-hydroxyacyl-CoA dehydrogenase family. In terms of assembly, monomer. Post-translationally, acetylated, leading to enhanced enzyme activity. Acetylation is enhanced by up to 80% after treatment either with trichostin A (TSA) or with nicotinamide (NAM) with highest increase on Lys-346. Acetylation and enzyme activity increased by about 1.5% on addition of fatty acids. In terms of tissue distribution, liver and kidney. Strongly expressed in the terminal segments of the proximal tubule. Lower amounts seen in the brain.

Its subcellular location is the peroxisome. It carries out the reaction a (3S)-3-hydroxyacyl-CoA = a (2E)-enoyl-CoA + H2O. The enzyme catalyses a 4-saturated-(3S)-3-hydroxyacyl-CoA = a (3E)-enoyl-CoA + H2O. The catalysed reaction is a (3Z)-enoyl-CoA = a 4-saturated (2E)-enoyl-CoA. It catalyses the reaction a (3E)-enoyl-CoA = a 4-saturated (2E)-enoyl-CoA. It carries out the reaction a (3S)-3-hydroxyacyl-CoA + NAD(+) = a 3-oxoacyl-CoA + NADH + H(+). The enzyme catalyses (2S,3S)-3-hydroxy-2-methylbutanoyl-CoA = (2E)-2-methylbut-2-enoyl-CoA + H2O. The catalysed reaction is (3S)-hydroxyhexadecanoyl-CoA + NAD(+) = 3-oxohexadecanoyl-CoA + NADH + H(+). It catalyses the reaction (3S)-hydroxyhexadecanoyl-CoA = (2E)-hexadecenoyl-CoA + H2O. It carries out the reaction (2E)-hexadecenedioyl-CoA + H2O = (3S)-hydroxyhexadecanedioyl-CoA. The enzyme catalyses (3S)-hydroxyhexadecanedioyl-CoA + NAD(+) = 3-oxohexadecanedioyl-CoA + NADH + H(+). The catalysed reaction is (3E,5Z)-tetradecadienoyl-CoA = (2E,5Z)-tetradecadienoyl-CoA. It catalyses the reaction (3E,5Z)-octadienoyl-CoA = (2E,5Z)-octadienoyl-CoA. It carries out the reaction (3S)-hydroxydecanoyl-CoA + NAD(+) = 3-oxodecanoyl-CoA + NADH + H(+). The enzyme catalyses (3E)-decenoyl-CoA = (2E)-decenoyl-CoA. The catalysed reaction is (3Z)-hexenoyl-CoA = (2E)-hexenoyl-CoA. It catalyses the reaction (3E)-hexenoyl-CoA = (2E)-hexenoyl-CoA. It carries out the reaction (3S)-hydroxydecanoyl-CoA = (2E)-decenoyl-CoA + H2O. The enzyme catalyses (3S)-hydroxyhexanoyl-CoA = (2E)-hexenoyl-CoA + H2O. Its pathway is lipid metabolism; fatty acid beta-oxidation. With respect to regulation, enzyme activity enhanced by acetylation. Functionally, peroxisomal trifunctional enzyme possessing 2-enoyl-CoA hydratase, 3-hydroxyacyl-CoA dehydrogenase, and delta 3, delta 2-enoyl-CoA isomerase activities. Catalyzes two of the four reactions of the long chain fatty acids peroxisomal beta-oxidation pathway. Can also use branched-chain fatty acids such as 2-methyl-2E-butenoyl-CoA as a substrate, which is hydrated into (2S,3S)-3-hydroxy-2-methylbutanoyl-CoA. Optimal isomerase for 2,5 double bonds into 3,5 form isomerization in a range of enoyl-CoA species. Also able to isomerize both 3-cis and 3-trans double bonds into the 2-trans form in a range of enoyl-CoA species. With HSD17B4, catalyzes the hydration of trans-2-enoyl-CoA and the dehydrogenation of 3-hydroxyacyl-CoA, but with opposite chiral specificity. Regulates the amount of medium-chain dicarboxylic fatty acids which are essential regulators of all fatty acid oxidation pathways. Also involved in the degradation of long-chain dicarboxylic acids through peroxisomal beta-oxidation. This Homo sapiens (Human) protein is Peroxisomal bifunctional enzyme.